Here is an 84-residue protein sequence, read N- to C-terminus: U8-theraphotoxin-Hhn1g (84 aa).

The N-terminal stretch at 1 to 21 (MKVVLLVCLVWMMAMMELVSC) is a signal peptide. 5 disulfide bridges follow: cysteine 23-cysteine 35, cysteine 29-cysteine 44, cysteine 34-cysteine 67, cysteine 54-cysteine 75, and cysteine 69-cysteine 81.

Belongs to the AVIT (prokineticin) family. Expressed by the venom gland.

The protein localises to the secreted. This chain is U8-theraphotoxin-Hhn1g, found in Cyriopagopus hainanus (Chinese bird spider).